Reading from the N-terminus, the 145-residue chain is DnaJ homolog subfamily B member 3 (145 aa).

Positions 1–69 (MVDYYEVLDV…KKRDIYDRYG (69 aa)) constitute a J domain.

In terms of tissue distribution, expressed in sperm (at protein level).

In terms of biological role, may operate as a co-chaperone of the male germ cell- and haploid stage-specific Hsp70 proteins. This chain is DnaJ homolog subfamily B member 3 (DNAJB3), found in Homo sapiens (Human).